Reading from the N-terminus, the 169-residue chain is Putative tRNA (cytidine(34)-2'-O)-methyltransferase (169 aa).

Residues I79, G104, I125, and S133 each contribute to the S-adenosyl-L-methionine site.

It belongs to the class IV-like SAM-binding methyltransferase superfamily. RNA methyltransferase TrmH family. TrmL subfamily.

Its subcellular location is the cytoplasm. The enzyme catalyses cytidine(34) in tRNA + S-adenosyl-L-methionine = 2'-O-methylcytidine(34) in tRNA + S-adenosyl-L-homocysteine + H(+). The catalysed reaction is 5-carboxymethylaminomethyluridine(34) in tRNA(Leu) + S-adenosyl-L-methionine = 5-carboxymethylaminomethyl-2'-O-methyluridine(34) in tRNA(Leu) + S-adenosyl-L-homocysteine + H(+). In terms of biological role, could methylate the ribose at the nucleotide 34 wobble position in tRNA. This chain is Putative tRNA (cytidine(34)-2'-O)-methyltransferase, found in Listeria innocua serovar 6a (strain ATCC BAA-680 / CLIP 11262).